A 529-amino-acid chain; its full sequence is Bifunctional purine biosynthesis protein PurH (529 aa).

The MGS-like domain occupies Met-1–Val-148.

The protein belongs to the PurH family.

The enzyme catalyses (6R)-10-formyltetrahydrofolate + 5-amino-1-(5-phospho-beta-D-ribosyl)imidazole-4-carboxamide = 5-formamido-1-(5-phospho-D-ribosyl)imidazole-4-carboxamide + (6S)-5,6,7,8-tetrahydrofolate. The catalysed reaction is IMP + H2O = 5-formamido-1-(5-phospho-D-ribosyl)imidazole-4-carboxamide. Its pathway is purine metabolism; IMP biosynthesis via de novo pathway; 5-formamido-1-(5-phospho-D-ribosyl)imidazole-4-carboxamide from 5-amino-1-(5-phospho-D-ribosyl)imidazole-4-carboxamide (10-formyl THF route): step 1/1. It functions in the pathway purine metabolism; IMP biosynthesis via de novo pathway; IMP from 5-formamido-1-(5-phospho-D-ribosyl)imidazole-4-carboxamide: step 1/1. The sequence is that of Bifunctional purine biosynthesis protein PurH from Salmonella typhi.